Reading from the N-terminus, the 210-residue chain is Probable septum site-determining protein MinC (210 aa).

The protein belongs to the MinC family. Interacts with MinD and FtsZ.

Cell division inhibitor that blocks the formation of polar Z ring septums. Rapidly oscillates between the poles of the cell to destabilize FtsZ filaments that have formed before they mature into polar Z rings. Prevents FtsZ polymerization. The polypeptide is Probable septum site-determining protein MinC (Thermotoga petrophila (strain ATCC BAA-488 / DSM 13995 / JCM 10881 / RKU-1)).